We begin with the raw amino-acid sequence, 349 residues long: Protein-arginine kinase (349 aa).

In terms of domain architecture, Phosphagen kinase C-terminal spans 24 to 252 (IVLSSRIRLA…SQIIEQERQA (229 aa)). Residues 27-31 (SSRIR), H89, R123, 174-178 (RASVM), and 205-210 (RGIYGE) each bind ATP. An RDXXRA motif of the pArg binding pocket involved in allosteric regulation motif is present at residues 335–340 (RDIKRA).

Belongs to the ATP:guanido phosphotransferase family.

It carries out the reaction L-arginyl-[protein] + ATP = N(omega)-phospho-L-arginyl-[protein] + ADP + H(+). Appears to be allosterically activated by the binding of pArg-containing polypeptides to the pArg-binding pocket localized in the C-terminal domain of McsB. Its function is as follows. Catalyzes the specific phosphorylation of arginine residues in proteins. The polypeptide is Protein-arginine kinase (Halothermothrix orenii (strain H 168 / OCM 544 / DSM 9562)).